The primary structure comprises 138 residues: Large ribosomal subunit protein uL16 (138 aa).

A compositionally biased stretch (basic residues) spans 1–13 (MLQPKRRKYRKEQ). A disordered region spans residues 1–24 (MLQPKRRKYRKEQKGRNTGKATRG).

This sequence belongs to the universal ribosomal protein uL16 family. As to quaternary structure, part of the 50S ribosomal subunit.

Its function is as follows. Binds 23S rRNA and is also seen to make contacts with the A and possibly P site tRNAs. The chain is Large ribosomal subunit protein uL16 from Burkholderia lata (strain ATCC 17760 / DSM 23089 / LMG 22485 / NCIMB 9086 / R18194 / 383).